Reading from the N-terminus, the 187-residue chain is Accessory gene regulator protein B (187 aa).

The next 5 helical transmembrane spans lie at 49 to 69, 82 to 102, 106 to 126, 144 to 164, and 166 to 186; these read ISIFLSVFLFTLVTHLSYMLI, ILCYIQSILTFVFVPYFLINI, FTYLLALSIIGLISVVIYAPA, LSIIMYLLVLILSLIIHPFYA, and FMLLGILVESITLLPIFFPKE.

It belongs to the AgrB family.

Its subcellular location is the cell membrane. Essential for the production of a quorum sensing system signal molecule, the autoinducing peptide (AIP). This quorum sensing system is responsible for the regulation of the expression of virulence factor genes. Involved in the proteolytic processing of AgrD, the precursor of AIP. This chain is Accessory gene regulator protein B, found in Staphylococcus aureus (strain Mu50 / ATCC 700699).